Reading from the N-terminus, the 142-residue chain is ATP synthase epsilon chain (142 aa).

The protein belongs to the ATPase epsilon chain family. As to quaternary structure, F-type ATPases have 2 components, CF(1) - the catalytic core - and CF(0) - the membrane proton channel. CF(1) has five subunits: alpha(3), beta(3), gamma(1), delta(1), epsilon(1). CF(0) has three main subunits: a, b and c.

Its subcellular location is the cell inner membrane. Functionally, produces ATP from ADP in the presence of a proton gradient across the membrane. This chain is ATP synthase epsilon chain, found in Shewanella denitrificans (strain OS217 / ATCC BAA-1090 / DSM 15013).